Here is a 69-residue protein sequence, read N- to C-terminus: Cold shock-like protein CspC (69 aa).

The 61-residue stretch at 6-66 (GQVKWFNESK…GQKGPAAVNV (61 aa)) folds into the CSD domain.

It is found in the cytoplasm. This is Cold shock-like protein CspC (cspC) from Escherichia coli O157:H7.